The primary structure comprises 377 residues: Glutamate 5-kinase (377 aa).

Lys-20 contacts ATP. Substrate is bound by residues Ser-60, Asp-147, and Asn-159. 179-180 serves as a coordination point for ATP; it reads TD. The PUA domain maps to 285-363; it reads AGRLVIDDGA…DKVYQVLGEA (79 aa).

The protein belongs to the glutamate 5-kinase family.

It is found in the cytoplasm. The catalysed reaction is L-glutamate + ATP = L-glutamyl 5-phosphate + ADP. Its pathway is amino-acid biosynthesis; L-proline biosynthesis; L-glutamate 5-semialdehyde from L-glutamate: step 1/2. Catalyzes the transfer of a phosphate group to glutamate to form L-glutamate 5-phosphate. This Acinetobacter baumannii (strain AB307-0294) protein is Glutamate 5-kinase.